We begin with the raw amino-acid sequence, 375 residues long: Queuine tRNA-ribosyltransferase (375 aa).

Residue Asp89 is the Proton acceptor of the active site. Substrate-binding positions include 89-93 (DSGGF), Asp143, Gln187, and Gly214. The RNA binding stretch occupies residues 245–251 (GVGKPED). Asp264 serves as the catalytic Nucleophile. Residues 269-273 (TRNAR) form an RNA binding; important for wobble base 34 recognition region. Zn(2+) is bound by residues Cys302, Cys304, Cys307, and His333.

The protein belongs to the queuine tRNA-ribosyltransferase family. In terms of assembly, homodimer. Within each dimer, one monomer is responsible for RNA recognition and catalysis, while the other monomer binds to the replacement base PreQ1. Requires Zn(2+) as cofactor.

It carries out the reaction 7-aminomethyl-7-carbaguanine + guanosine(34) in tRNA = 7-aminomethyl-7-carbaguanosine(34) in tRNA + guanine. Its pathway is tRNA modification; tRNA-queuosine biosynthesis. Functionally, catalyzes the base-exchange of a guanine (G) residue with the queuine precursor 7-aminomethyl-7-deazaguanine (PreQ1) at position 34 (anticodon wobble position) in tRNAs with GU(N) anticodons (tRNA-Asp, -Asn, -His and -Tyr). Catalysis occurs through a double-displacement mechanism. The nucleophile active site attacks the C1' of nucleotide 34 to detach the guanine base from the RNA, forming a covalent enzyme-RNA intermediate. The proton acceptor active site deprotonates the incoming PreQ1, allowing a nucleophilic attack on the C1' of the ribose to form the product. After dissociation, two additional enzymatic reactions on the tRNA convert PreQ1 to queuine (Q), resulting in the hypermodified nucleoside queuosine (7-(((4,5-cis-dihydroxy-2-cyclopenten-1-yl)amino)methyl)-7-deazaguanosine). In Photobacterium profundum (strain SS9), this protein is Queuine tRNA-ribosyltransferase.